The following is a 225-amino-acid chain: Small ribosomal subunit protein uS3 (225 aa).

The 70-residue stretch at 16–85 folds into the KH type-2 domain; it reads VYEYLVKETE…TPQIEVKDVK (70 aa). Positions 200–225 are disordered; it reads GENVGTESETDKADEQGREAANTEES. Positions 208–217 are enriched in basic and acidic residues; it reads ETDKADEQGR.

It belongs to the universal ribosomal protein uS3 family. Part of the 30S ribosomal subunit.

Functionally, binds the lower part of the 30S subunit head. The polypeptide is Small ribosomal subunit protein uS3 (Thermoplasma volcanium (strain ATCC 51530 / DSM 4299 / JCM 9571 / NBRC 15438 / GSS1)).